We begin with the raw amino-acid sequence, 620 residues long: Glutathione-regulated potassium-efflux system protein KefC (620 aa).

Transmembrane regions (helical) follow at residues 4-24 (HTLV…PIAV), 26-46 (LGLG…PWGL), 54-74 (SILH…GLEL), 90-110 (GALQ…LLGL), 114-134 (VAEL…MQAM), 149-169 (FAVL…IPLL), 178-198 (MGAF…VVLL), 218-238 (VFSA…EEVG), 270-290 (GLLL…GTLL), 294-314 (LRIV…LWLI), 327-347 (WFAV…GAAQ), and 359-379 (SLTL…VILN). One can recognise an RCK N-terminal domain in the interval 399 to 518 (QPRVIIAGFG…AGVEKPERET (120 aa)). The disordered stretch occupies residues 597–620 (GWQGTEEGKHTGNMADEPETKPSS).

This sequence belongs to the monovalent cation:proton antiporter 2 (CPA2) transporter (TC 2.A.37) family. KefC subfamily. In terms of assembly, homodimer. Interacts with the regulatory subunit KefF.

It is found in the cell inner membrane. Its function is as follows. Pore-forming subunit of a potassium efflux system that confers protection against electrophiles. Catalyzes K(+)/H(+) antiport. In Escherichia coli O139:H28 (strain E24377A / ETEC), this protein is Glutathione-regulated potassium-efflux system protein KefC.